The chain runs to 381 residues: Cytochrome b (381 aa).

The next 4 membrane-spanning stretches (helical) occupy residues 33-53 (FGSL…FLAM), 77-98 (WLLR…FLHV), 113-133 (WNIG…GYVL), and 178-198 (FFAF…VHLL). Residues His83 and His97 each coordinate heme b. Heme b-binding residues include His182 and His196. A ubiquinone is bound at residue His201. Transmembrane regions (helical) follow at residues 226 to 246 (IKDA…ALFS), 288 to 308 (LGGV…PLLH), 320 to 340 (VSQT…WIGG), and 347 to 367 (FIII…VMMP).

This sequence belongs to the cytochrome b family. As to quaternary structure, the cytochrome bc1 complex contains 11 subunits: 3 respiratory subunits (MT-CYB, CYC1 and UQCRFS1), 2 core proteins (UQCRC1 and UQCRC2) and 6 low-molecular weight proteins (UQCRH/QCR6, UQCRB/QCR7, UQCRQ/QCR8, UQCR10/QCR9, UQCR11/QCR10 and a cleavage product of UQCRFS1). This cytochrome bc1 complex then forms a dimer. Heme b serves as cofactor.

It localises to the mitochondrion inner membrane. Component of the ubiquinol-cytochrome c reductase complex (complex III or cytochrome b-c1 complex) that is part of the mitochondrial respiratory chain. The b-c1 complex mediates electron transfer from ubiquinol to cytochrome c. Contributes to the generation of a proton gradient across the mitochondrial membrane that is then used for ATP synthesis. The polypeptide is Cytochrome b (MT-CYB) (Dasyurus hallucatus (Northern quoll)).